Here is a 1139-residue protein sequence, read N- to C-terminus: Phospholipid-transporting ATPase tat-1 (1139 aa).

3 helical membrane-spanning segments follow: residues 78–98 (YTTAVPFLIILSVSALKEIFE), 276–296 (IIFLFFVLVALALISATGSEI), and 318–338 (SFLWGVLTFFILYNNLIPISL). Asp-388 (4-aspartylphosphate intermediate) is an active-site residue. The next 6 helical transmembrane spans lie at 831 to 851 (ICLYIIELWFAMFSAWSGQTI), 855 to 875 (WTIGMFNVIFTAWPPVVLGLF), 901 to 921 (IGNFSLWIGLAIVHSLSLFFL), 935 to 955 (GLTGGWLMLGNCAYTFVVATV), 972 to 992 (VACIGSIGLWIVFVIVYSLVF), and 1013 to 1033 (YTFWLALLFIPLATLLWDLVI).

This sequence belongs to the cation transport ATPase (P-type) (TC 3.A.3) family. Type IV subfamily.

Its subcellular location is the cell membrane. The protein localises to the early endosome membrane. The protein resides in the recycling endosome membrane. The enzyme catalyses ATP + H2O + phospholipidSide 1 = ADP + phosphate + phospholipidSide 2.. It catalyses the reaction a 1,2-diacyl-sn-glycero-3-phospho-L-serine(out) + ATP + H2O = a 1,2-diacyl-sn-glycero-3-phospho-L-serine(in) + ADP + phosphate + H(+). Transports phosphatidylserine from the outer to the inner leaflet of the plasma membrane, thereby maintaining the enrichment of this phospholipid in the inner leaflet. Ectopic exposure of phosphatidylserine on the cell surface may result in removal of living cells by neighboring phagocytes. Regulation of the phosphatidylserine distribution in plasma membranes is likely to help in the maintenance and control of the membrane surface charge. Plays a role in the formation of the tubular membrane structure and in membrane trafficking and is specifically involved in the recycling and degradation of endocytic cargo, likely with its chaperone protein chat-1. The polypeptide is Phospholipid-transporting ATPase tat-1 (tat-1) (Caenorhabditis elegans).